We begin with the raw amino-acid sequence, 135 residues long: NADPH-dependent 7-cyano-7-deazaguanine reductase (135 aa).

The active-site Thioimide intermediate is cysteine 48. The active-site Proton donor is the aspartate 55. Residues 70-72 and 89-90 contribute to the substrate site; these read LEL and HE.

Belongs to the GTP cyclohydrolase I family. QueF type 1 subfamily.

The protein resides in the cytoplasm. The catalysed reaction is 7-aminomethyl-7-carbaguanine + 2 NADP(+) = 7-cyano-7-deazaguanine + 2 NADPH + 3 H(+). It functions in the pathway tRNA modification; tRNA-queuosine biosynthesis. In terms of biological role, catalyzes the NADPH-dependent reduction of 7-cyano-7-deazaguanine (preQ0) to 7-aminomethyl-7-deazaguanine (preQ1). This Prochlorococcus marinus (strain SARG / CCMP1375 / SS120) protein is NADPH-dependent 7-cyano-7-deazaguanine reductase.